Reading from the N-terminus, the 256-residue chain is 4-hydroxy-tetrahydrodipicolinate reductase (256 aa).

Residue 8–13 (GASGKM) coordinates NAD(+). Lys36 serves as a coordination point for NADP(+). NAD(+) contacts are provided by residues 87 to 89 (GTT) and 111 to 114 (ATNM). The active-site Proton donor/acceptor is His143. A (S)-2,3,4,5-tetrahydrodipicolinate-binding site is contributed by His144. The active-site Proton donor is Lys147. (S)-2,3,4,5-tetrahydrodipicolinate is bound at residue 153-154 (GT).

Belongs to the DapB family.

It is found in the cytoplasm. The catalysed reaction is (S)-2,3,4,5-tetrahydrodipicolinate + NAD(+) + H2O = (2S,4S)-4-hydroxy-2,3,4,5-tetrahydrodipicolinate + NADH + H(+). The enzyme catalyses (S)-2,3,4,5-tetrahydrodipicolinate + NADP(+) + H2O = (2S,4S)-4-hydroxy-2,3,4,5-tetrahydrodipicolinate + NADPH + H(+). The protein operates within amino-acid biosynthesis; L-lysine biosynthesis via DAP pathway; (S)-tetrahydrodipicolinate from L-aspartate: step 4/4. Functionally, catalyzes the conversion of 4-hydroxy-tetrahydrodipicolinate (HTPA) to tetrahydrodipicolinate. The polypeptide is 4-hydroxy-tetrahydrodipicolinate reductase (Campylobacter concisus (strain 13826)).